Consider the following 127-residue polypeptide: Membrane-bound lysozyme inhibitor of C-type lysozyme (127 aa).

Residues 1 to 18 (MKKALWLLLAAVPVVLVA) form the signal peptide. Residue cysteine 19 is the site of N-palmitoyl cysteine attachment. Cysteine 19 is lipidated: S-diacylglycerol cysteine. An intrachain disulfide couples cysteine 51 to cysteine 124.

It belongs to the MliC family. Type 2 subfamily. In terms of assembly, homodimer.

The protein resides in the cell outer membrane. Its function is as follows. Specifically inhibits C-type lysozymes. This Pseudomonas aeruginosa (strain ATCC 15692 / DSM 22644 / CIP 104116 / JCM 14847 / LMG 12228 / 1C / PRS 101 / PAO1) protein is Membrane-bound lysozyme inhibitor of C-type lysozyme.